A 124-amino-acid polypeptide reads, in one-letter code: Fluoride-specific ion channel FluC (124 aa).

A run of 4 helical transmembrane segments spans residues 5 to 25, 37 to 57, 69 to 89, and 99 to 119; these read ILAV…AGTW, ATLA…GLFL, GLIV…LDTL, and LALG…WAGL. Na(+) contacts are provided by Gly76 and Thr79.

The protein belongs to the fluoride channel Fluc/FEX (TC 1.A.43) family.

It localises to the cell inner membrane. It catalyses the reaction fluoride(in) = fluoride(out). Its activity is regulated as follows. Na(+) is not transported, but it plays an essential structural role and its presence is essential for fluoride channel function. Fluoride-specific ion channel. Important for reducing fluoride concentration in the cell, thus reducing its toxicity. In Pseudomonas syringae pv. tomato (strain ATCC BAA-871 / DC3000), this protein is Fluoride-specific ion channel FluC.